We begin with the raw amino-acid sequence, 136 residues long: Holo-[acyl-carrier-protein] synthase (136 aa).

Mg(2+)-binding residues include D8 and E58.

Belongs to the P-Pant transferase superfamily. AcpS family. Mg(2+) serves as cofactor.

It localises to the cytoplasm. The enzyme catalyses apo-[ACP] + CoA = holo-[ACP] + adenosine 3',5'-bisphosphate + H(+). Functionally, transfers the 4'-phosphopantetheine moiety from coenzyme A to a Ser of acyl-carrier-protein. This is Holo-[acyl-carrier-protein] synthase from Leuconostoc mesenteroides subsp. mesenteroides (strain ATCC 8293 / DSM 20343 / BCRC 11652 / CCM 1803 / JCM 6124 / NCDO 523 / NBRC 100496 / NCIMB 8023 / NCTC 12954 / NRRL B-1118 / 37Y).